Consider the following 148-residue polypeptide: Large-conductance mechanosensitive channel (148 aa).

The next 2 helical transmembrane spans lie at 16-36 and 89-109; these read VMDL…VNSI and GSFI…FLMV.

Belongs to the MscL family. Homopentamer.

The protein localises to the cell inner membrane. Its function is as follows. Channel that opens in response to stretch forces in the membrane lipid bilayer. May participate in the regulation of osmotic pressure changes within the cell. The protein is Large-conductance mechanosensitive channel of Paraburkholderia phytofirmans (strain DSM 17436 / LMG 22146 / PsJN) (Burkholderia phytofirmans).